The following is a 433-amino-acid chain: Evolutionarily conserved signaling intermediate in Toll pathway, mitochondrial (433 aa).

A mitochondrion-targeting transit peptide spans 1–48 (MSWAQAILLARGASRGWGGICSTALTGAPFSQVPPQAPRGLRCSAAAH). Residues 36 to 63 (QAPRGLRCSAAAHNPDSSLVPHPPEPPR) are disordered. A Glycyl lysine isopeptide (Lys-Gly) (interchain with G-Cter in ubiquitin) cross-link involves residue Lys-372. Residues 397–433 (SGELLPSSSELEEPPPPPPEGQEEEEDSQQRQQQGQS) form a disordered region.

Belongs to the ECSIT family. In terms of assembly, interacts with MAP3K1, SMAD4 and TRAF6. Interacts with SMAD1 only after BMP4-treatment. Part of the mitochondrial complex I assembly/MCIA complex that comprises at least the core subunits TMEM126B, NDUFAF1, ECSIT and ACAD9 and complement subunits such as COA1 and TMEM186. Interacts with NDUFAF1. Interacts with ACAD9. Interacts with TRIM59. Interacts with TMEM70 and TMEM242. Interacts (when ubiquitinated) with NF-kappa-B subunits RELA and NFKB1. Interacts with RIGI, IFIT1 and MAVS; these interactions promote RLR-mediated type I IFN induction. Interacts with SQSTM1; this interaction inhibits TLR4 signaling via functional regulation of the TRAF6-ECSIT complex. Interacts with cereblon/CRBN; this interaction inhibits the ubiquitination of ECSIT. In terms of processing, ubiquitinated on Lys-372; leading to translocation in the nucleus together with RELA and NFKB1 and expression of NF-kappa-B-dependent genes.

It is found in the cytoplasm. The protein resides in the nucleus. It localises to the mitochondrion. Adapter protein that plays a role in different signaling pathways including TLRs and IL-1 pathways or innate antiviral induction signaling. Plays a role in the activation of NF-kappa-B by forming a signal complex with TRAF6 and TAK1/MAP3K7 to activate TAK1/MAP3K7 leading to activation of IKKs. Once ubiquitinated, interacts with the dissociated RELA and NFKB1 proteins and translocates to the nucleus where it induces NF-kappa-B-dependent gene expression. Plays a role in innate antiviral immune response by bridging the pattern recognition receptors RIGI and MDA5/IFIT1 to the MAVS complex at the mitochondrion. Promotes proteolytic activation of MAP3K1. Involved in the BMP signaling pathway. Required for normal embryonic development. Functionally, as part of the MCIA complex, involved in the assembly of the mitochondrial complex I. The protein is Evolutionarily conserved signaling intermediate in Toll pathway, mitochondrial of Bos taurus (Bovine).